The primary structure comprises 372 residues: Ribosomal RNA small subunit methyltransferase H (372 aa).

S-adenosyl-L-methionine is bound by residues 78-80, Asp97, Tyr124, Asp148, and Gln155; that span reads GGH.

It belongs to the methyltransferase superfamily. RsmH family.

Its subcellular location is the cytoplasm. It catalyses the reaction cytidine(1402) in 16S rRNA + S-adenosyl-L-methionine = N(4)-methylcytidine(1402) in 16S rRNA + S-adenosyl-L-homocysteine + H(+). Its function is as follows. Specifically methylates the N4 position of cytidine in position 1402 (C1402) of 16S rRNA. The sequence is that of Ribosomal RNA small subunit methyltransferase H from Mycobacterium leprae (strain Br4923).